A 100-amino-acid polypeptide reads, in one-letter code: Nucleoid-associated protein HPSH_00175 (100 aa).

The protein belongs to the YbaB/EbfC family. Homodimer.

Its subcellular location is the cytoplasm. The protein localises to the nucleoid. Binds to DNA and alters its conformation. May be involved in regulation of gene expression, nucleoid organization and DNA protection. The polypeptide is Nucleoid-associated protein HPSH_00175 (Helicobacter pylori (strain Shi470)).